A 296-amino-acid polypeptide reads, in one-letter code: 4-hydroxy-tetrahydrodipicolinate synthase (296 aa).

Position 49 (T49) interacts with pyruvate. Y137 (proton donor/acceptor) is an active-site residue. K166 functions as the Schiff-base intermediate with substrate in the catalytic mechanism. Pyruvate is bound at residue I208.

Belongs to the DapA family. As to quaternary structure, homotetramer; dimer of dimers.

The protein resides in the cytoplasm. It catalyses the reaction L-aspartate 4-semialdehyde + pyruvate = (2S,4S)-4-hydroxy-2,3,4,5-tetrahydrodipicolinate + H2O + H(+). The protein operates within amino-acid biosynthesis; L-lysine biosynthesis via DAP pathway; (S)-tetrahydrodipicolinate from L-aspartate: step 3/4. In terms of biological role, catalyzes the condensation of (S)-aspartate-beta-semialdehyde [(S)-ASA] and pyruvate to 4-hydroxy-tetrahydrodipicolinate (HTPA). This is 4-hydroxy-tetrahydrodipicolinate synthase from Chlorobium luteolum (strain DSM 273 / BCRC 81028 / 2530) (Pelodictyon luteolum).